We begin with the raw amino-acid sequence, 971 residues long: Protein cwh43 (971 aa).

Residues 1 to 242 (MTEKTSSLVF…PSSFATRKKE (242 aa)) are PGAP2-like. 19 consecutive transmembrane segments (helical) span residues 15-35 (VALV…ALAL), 71-91 (VFQW…LLWF), 101-121 (VIIT…WVYV), 129-149 (WHDI…ILVS), 161-181 (IRNI…YWYI), 188-208 (IPGA…WDIL), 286-306 (VYLS…VWYF), 313-333 (ISGY…GIPL), 336-356 (KFAS…IAAY), 366-386 (FVTA…FSNI), 397-417 (ISTF…FFSN), 432-452 (QIPA…FHVQ), 467-487 (ITAL…HTFL), 509-529 (YPHG…APYL), 532-552 (SGAF…FMYI), 555-575 (GWCS…YSFA), 588-608 (VWGG…WVVA), 622-642 (TSYI…AYSG), and 673-693 (LLTG…NMPP). The PGAP2IP-like stretch occupies residues 243–971 (KGEHLSYAEA…LVVHEPWYYD (729 aa)). H826 is a catalytic residue.

In the N-terminal section; belongs to the PGAP2 family. It in the C-terminal section; belongs to the PGAP2IP family.

The protein localises to the cell membrane. It is found in the endoplasmic reticulum membrane. In terms of biological role, involved in the maintenance of cell wall integrity. Required for the replacement of the diacylglycerol moiety by ceramides during GPI-anchor maturation. The protein is Protein cwh43 (cwh43) of Schizosaccharomyces pombe (strain 972 / ATCC 24843) (Fission yeast).